Reading from the N-terminus, the 123-residue chain is Small ribosomal subunit protein uS12c (123 aa).

Polar residues predominate over residues 1-20; that stretch reads MPTIQQLIRNTRQPTQNRTK. The tract at residues 1 to 27 is disordered; the sequence is MPTIQQLIRNTRQPTQNRTKSPALKAC.

This sequence belongs to the universal ribosomal protein uS12 family. In terms of assembly, part of the 30S ribosomal subunit.

The protein resides in the plastid. Its subcellular location is the chloroplast. Functionally, with S4 and S5 plays an important role in translational accuracy. Located at the interface of the 30S and 50S subunits. This Zygnema circumcarinatum (Green alga) protein is Small ribosomal subunit protein uS12c (rps12).